Here is a 426-residue protein sequence, read N- to C-terminus: Serine hydroxymethyltransferase (426 aa).

(6S)-5,6,7,8-tetrahydrofolate is bound by residues leucine 113 and glycine 117–leucine 119. Residue lysine 222 is modified to N6-(pyridoxal phosphate)lysine. Serine 363–phenylalanine 365 is a binding site for (6S)-5,6,7,8-tetrahydrofolate.

The protein belongs to the SHMT family. In terms of assembly, homodimer. It depends on pyridoxal 5'-phosphate as a cofactor.

It is found in the cytoplasm. The enzyme catalyses (6R)-5,10-methylene-5,6,7,8-tetrahydrofolate + glycine + H2O = (6S)-5,6,7,8-tetrahydrofolate + L-serine. Its pathway is one-carbon metabolism; tetrahydrofolate interconversion. It functions in the pathway amino-acid biosynthesis; glycine biosynthesis; glycine from L-serine: step 1/1. Its function is as follows. Catalyzes the reversible interconversion of serine and glycine with tetrahydrofolate (THF) serving as the one-carbon carrier. This reaction serves as the major source of one-carbon groups required for the biosynthesis of purines, thymidylate, methionine, and other important biomolecules. Also exhibits THF-independent aldolase activity toward beta-hydroxyamino acids, producing glycine and aldehydes, via a retro-aldol mechanism. The polypeptide is Serine hydroxymethyltransferase (Bacteroides thetaiotaomicron (strain ATCC 29148 / DSM 2079 / JCM 5827 / CCUG 10774 / NCTC 10582 / VPI-5482 / E50)).